Consider the following 145-residue polypeptide: 3-dehydroquinate dehydratase (145 aa).

The Proton acceptor role is filled by Tyr-24. Residues Asn-76, His-82, and Asp-89 each coordinate substrate. The Proton donor role is filled by His-102. Substrate-binding positions include 103–104 and Arg-113; that span reads VS.

This sequence belongs to the type-II 3-dehydroquinase family. In terms of assembly, homododecamer.

The catalysed reaction is 3-dehydroquinate = 3-dehydroshikimate + H2O. It functions in the pathway metabolic intermediate biosynthesis; chorismate biosynthesis; chorismate from D-erythrose 4-phosphate and phosphoenolpyruvate: step 3/7. Catalyzes a trans-dehydration via an enolate intermediate. The protein is 3-dehydroquinate dehydratase of Herminiimonas arsenicoxydans.